The sequence spans 489 residues: Glycogen synthase (489 aa).

R20 contributes to the ADP-alpha-D-glucose binding site.

This sequence belongs to the glycosyltransferase 1 family. Bacterial/plant glycogen synthase subfamily.

The enzyme catalyses [(1-&gt;4)-alpha-D-glucosyl](n) + ADP-alpha-D-glucose = [(1-&gt;4)-alpha-D-glucosyl](n+1) + ADP + H(+). The protein operates within glycan biosynthesis; glycogen biosynthesis. Functionally, synthesizes alpha-1,4-glucan chains using ADP-glucose. The chain is Glycogen synthase from Chlorobium limicola (strain DSM 245 / NBRC 103803 / 6330).